A 226-amino-acid chain; its full sequence is ATP synthase F(0) complex subunit a (226 aa).

Helical transmembrane passes span 12–32 (PTMM…ILFP), 68–88 (WTLM…LGLL), 97–117 (QLSM…VTGF), 138–158 (IPML…ALAV), 164–184 (ITAG…LMSI), and 189–209 (ASIT…VALI).

The protein belongs to the ATPase A chain family. Component of the ATP synthase complex composed at least of ATP5F1A/subunit alpha, ATP5F1B/subunit beta, ATP5MC1/subunit c (homooctomer), MT-ATP6/subunit a, MT-ATP8/subunit 8, ATP5ME/subunit e, ATP5MF/subunit f, ATP5MG/subunit g, ATP5MK/subunit k, ATP5MJ/subunit j, ATP5F1C/subunit gamma, ATP5F1D/subunit delta, ATP5F1E/subunit epsilon, ATP5PF/subunit F6, ATP5PB/subunit b, ATP5PD/subunit d, ATP5PO/subunit OSCP. ATP synthase complex consists of a soluble F(1) head domain (subunits alpha(3) and beta(3)) - the catalytic core - and a membrane F(0) domain - the membrane proton channel (subunits c, a, 8, e, f, g, k and j). These two domains are linked by a central stalk (subunits gamma, delta, and epsilon) rotating inside the F1 region and a stationary peripheral stalk (subunits F6, b, d, and OSCP). Interacts with DNAJC30; interaction is direct.

It is found in the mitochondrion inner membrane. It catalyses the reaction H(+)(in) = H(+)(out). Functionally, subunit a, of the mitochondrial membrane ATP synthase complex (F(1)F(0) ATP synthase or Complex V) that produces ATP from ADP in the presence of a proton gradient across the membrane which is generated by electron transport complexes of the respiratory chain. ATP synthase complex consist of a soluble F(1) head domain - the catalytic core - and a membrane F(1) domain - the membrane proton channel. These two domains are linked by a central stalk rotating inside the F(1) region and a stationary peripheral stalk. During catalysis, ATP synthesis in the catalytic domain of F(1) is coupled via a rotary mechanism of the central stalk subunits to proton translocation. With the subunit c (ATP5MC1), forms the proton-conducting channel in the F(0) domain, that contains two crucial half-channels (inlet and outlet) that facilitate proton movement from the mitochondrial intermembrane space (IMS) into the matrix. Protons are taken up via the inlet half-channel and released through the outlet half-channel, following a Grotthuss mechanism. This is ATP synthase F(0) complex subunit a from Dasypus novemcinctus (Nine-banded armadillo).